A 549-amino-acid polypeptide reads, in one-letter code: Biotin-dependent acetyl-/propionyl-coenzyme A carboxylase beta5 subunit (549 aa).

The CoA carboxyltransferase N-terminal domain maps to 25-281; the sequence is TAGKLAELHK…NNFTDAPRYS (257 aa). The CoA carboxyltransferase C-terminal domain maps to 295-542; the sequence is AKDLELDTLI…ERKIAHLPPK (248 aa).

Belongs to the AccD/PCCB family. In terms of assembly, the biotin-dependent acyl-CoA carboxylase complex is composed of AccA3, which contains the biotin carboxylase (BC) and biotin carboxyl carrier protein (BCCP) domains, and AccD5, which contains the carboxyl transferase (CT) domain.

The catalysed reaction is N(6)-carboxybiotinyl-L-lysyl-[protein] + acetyl-CoA = N(6)-biotinyl-L-lysyl-[protein] + malonyl-CoA. It catalyses the reaction N(6)-carboxybiotinyl-L-lysyl-[protein] + propanoyl-CoA = methylmalonyl-CoA + N(6)-biotinyl-L-lysyl-[protein]. Its pathway is lipid metabolism; mycolic acid biosynthesis. Component of a biotin-dependent acyl-CoA carboxylase complex. This subunit transfers the CO2 from carboxybiotin to the CoA ester substrate. When associated with the alpha3 subunit AccA3, is involved in the carboxylation of acetyl-CoA and propionyl-CoA. This is Biotin-dependent acetyl-/propionyl-coenzyme A carboxylase beta5 subunit (accD5) from Mycobacterium leprae (strain TN).